The chain runs to 530 residues: [Pyruvate dehydrogenase [acetyl-transferring]]-phosphatase 2, mitochondrial (530 aa).

The N-terminal 67 residues, 1-67, are a transit peptide targeting the mitochondrion; it reads MSSTASYRIF…FALRKAYRHT (67 aa). Residues 107-518 enclose the PPM-type phosphatase domain; the sequence is VLRFESNQLA…DDITVMVVFF (412 aa). Positions 142, 143, 413, and 509 each coordinate Mn(2+).

Belongs to the PP2C family. Mg(2+) is required as a cofactor. In terms of tissue distribution, highly expressed in liver.

The protein resides in the mitochondrion. The enzyme catalyses O-phospho-L-seryl-[pyruvate dehydrogenase E1 alpha subunit] + H2O = L-seryl-[pyruvate dehydrogenase E1 alpha subunit] + phosphate. Its activity is regulated as follows. Mg(2+)-dependent protein phosphatase. Phosphatase activity is increased in the presence of spermine, a naturally produced polyamine. Functionally, mitochondrial enzyme that catalyzes the dephosphorylation and concomitant reactivation of the alpha subunit of the E1 component of the pyruvate dehydrogenase complex (PDC), thereby stimulating the conversion of pyruvate into acetyl-CoA. Acts as a crucial regulator of T cell metabolism and function, with a particular focus on T-helper Th17. The protein is [Pyruvate dehydrogenase [acetyl-transferring]]-phosphatase 2, mitochondrial (Pdp2) of Rattus norvegicus (Rat).